The sequence spans 323 residues: Porphobilinogen deaminase (323 aa).

S-(dipyrrolylmethanemethyl)cysteine is present on Cys251.

It belongs to the HMBS family. As to quaternary structure, monomer. Requires dipyrromethane as cofactor.

It carries out the reaction 4 porphobilinogen + H2O = hydroxymethylbilane + 4 NH4(+). Its pathway is porphyrin-containing compound metabolism; protoporphyrin-IX biosynthesis; coproporphyrinogen-III from 5-aminolevulinate: step 2/4. It participates in porphyrin-containing compound metabolism; chlorophyll biosynthesis. Its function is as follows. Tetrapolymerization of the monopyrrole PBG into the hydroxymethylbilane pre-uroporphyrinogen in several discrete steps. The polypeptide is Porphobilinogen deaminase (hemC) (Nostoc sp. (strain PCC 7120 / SAG 25.82 / UTEX 2576)).